Here is a 301-residue protein sequence, read N- to C-terminus: MEQQKFPNPRIFEDIDATDFSKHNKKHVTEDFVAENFKDVGWRVYRPFNDTGIDLIAKKFVCPDGHTKWNQNLTKEMTCSECGKSLIEITRFIQVKTREVKQVKTREAKGEKFFFGYTLKSKDFRTDPRHVFLLYSDFTMDFIILPMYDYLNLFYTNQSLGSTHFSTPSFRQGNNKLNGLSKDKNDNWVWSGVSFNEFVNEKGMDKLSCPIYDIELESYTKKIQELKFSLFYRYSPGRKNQVSAPTVEFINNHFSIFISLPKEAIASKRKAHLESLRQDLPEDLKKSVNEGYLVKFKGVDL.

A CHC2-type zinc finger spans residues 62–82; that stretch reads CPDGHTKWNQNLTKEMTCSEC.

Heterotetramer of two alpha and two beta subunits. The alpha subunit is believed to be responsible for DNA recognition, while the beta subunit is thought to mediate cleavage. Requires Zn(2+) as cofactor.

The catalysed reaction is Endonucleolytic cleavage of DNA to give specific double-stranded fragments with terminal 5'-phosphates.. Its function is as follows. A P subtype restriction enzyme that recognizes the double-stranded sequence 5'-CCN(7)GG-3' and cleaves after N-7. In Bacillus sp. (strain NEB-606), this protein is Type II restriction enzyme BslI subunit beta.